Consider the following 355-residue polypeptide: Capsid protein VP1/VP2 (355 aa).

Over residues 1 to 21 (MADSTTMEHDGRGTKRKREAD) the composition is skewed to basic and acidic residues. Residues 1-41 (MADSTTMEHDGRGTKRKREADGGSGQGVGKGNSNAVKEGYG) are disordered.

It belongs to the parvoviridae capsid protein family.

The protein localises to the virion. In terms of biological role, capsid protein self-assembles to form an icosahedral capsid with a T=1 symmetry, about 22 nm in diameter, and consisting of 60 copies of size variants of the capsid proteins, which differ in the N-terminushe capsid encapsulates the genomic ssDNA. Capsid proteins are responsible for the attachment to host cell receptors. This attachment induces virion internalization predominantly through clathrin-dependent endocytosis. The chain is Capsid protein VP1/VP2 (VP) from Aedes albopictus densovirus (isolate Boublik/1994) (AalDNV).